A 1136-amino-acid polypeptide reads, in one-letter code: Tyrosine-protein kinase receptor Tie-1 (1136 aa).

Positions 1–23 are cleaved as a signal peptide; the sequence is MVWLEPPLLLPIFFLASHVGAAV. The Extracellular portion of the chain corresponds to 24–757; that stretch reads DLTLLADLRL…IHAAEEGLDQ (734 aa). The 64-residue stretch at 43 to 106 folds into the Ig-like C2-type 1 domain; it reads CVSGEAGAGR…PSDLVGVFSC (64 aa). N-linked (GlcNAc...) asparagine glycosylation is found at asparagine 84 and asparagine 159. EGF-like domains follow at residues 212 to 254, 256 to 301, and 303 to 343; these read GCEA…TRCE, ACRE…SQCQ, and ACAP…MHCE. Cystine bridges form between cysteine 226/cysteine 235, cysteine 229/cysteine 242, and cysteine 244/cysteine 253. Disulfide bonds link cysteine 317/cysteine 325, cysteine 319/cysteine 331, and cysteine 333/cysteine 342. In terms of domain architecture, Ig-like C2-type 2 spans 370–424; sequence CAAAGNPFPVRGSMELRKPDGTVLLSTKAIVEPDRTTAEFEVPRLALGDSGLWEC. Fibronectin type-III domains follow at residues 444 to 543, 546 to 640, and 644 to 737; these read PPVP…CPEP, KPWL…LPPS, and APRH…TLGN. 3 N-linked (GlcNAc...) asparagine glycosylation sites follow: asparagine 501, asparagine 594, and asparagine 707. Residues 758–782 form a helical membrane-spanning segment; the sequence is QLVLAVVGSVSATCLTILAALLTLA. The Cytoplasmic segment spans residues 783–1136; the sequence is CIRKSCLHRR…AGIDATAEEA (354 aa). A Protein kinase domain is found at 837–1116; the sequence is ITFEDLIGEG…RMLEARKAYV (280 aa). ATP-binding positions include 843-851 and lysine 868; that span reads IGEGNFGQV. The active-site Proton acceptor is the aspartate 977. At tyrosine 1005 the chain carries Phosphotyrosine; by autocatalysis.

It belongs to the protein kinase superfamily. Tyr protein kinase family. Tie subfamily. As to quaternary structure, heterodimer with TEK/TIE2. Interacts with SVEP1 (via C-terminus). In terms of processing, phosphorylated on tyrosine residues in response to ANGPT1, most likely by TEK/TIE2. Specifically expressed in developing vascular endothelial cells.

It is found in the cell membrane. The enzyme catalyses L-tyrosyl-[protein] + ATP = O-phospho-L-tyrosyl-[protein] + ADP + H(+). In terms of biological role, transmembrane tyrosine-protein kinase that may modulate TEK/TIE2 activity and contribute to the regulation of angiogenesis. The polypeptide is Tyrosine-protein kinase receptor Tie-1 (TIE1) (Bos taurus (Bovine)).